The sequence spans 274 residues: Large ribosomal subunit protein uL2 (274 aa).

Residues 223-274 (VAMNPVDHPHGGGEGRTSGGRHPVTPWGVPTKGYKTRSNKRTDKYIVRRRNK) form a disordered region.

This sequence belongs to the universal ribosomal protein uL2 family. In terms of assembly, part of the 50S ribosomal subunit. Forms a bridge to the 30S subunit in the 70S ribosome.

Its function is as follows. One of the primary rRNA binding proteins. Required for association of the 30S and 50S subunits to form the 70S ribosome, for tRNA binding and peptide bond formation. It has been suggested to have peptidyltransferase activity; this is somewhat controversial. Makes several contacts with the 16S rRNA in the 70S ribosome. The protein is Large ribosomal subunit protein uL2 of Shewanella oneidensis (strain ATCC 700550 / JCM 31522 / CIP 106686 / LMG 19005 / NCIMB 14063 / MR-1).